The sequence spans 174 residues: Eukaryotic translation elongation factor 1 epsilon-1 (174 aa).

The residue at position 2 (Ala2) is an N-acetylalanine. Positions 2-56 (AAAAELKLLEKSLGLRPGNKYSAQGERQIPVLQTNNGPSLTGLATIATHLVKQAS) are N-terminal. The region spanning 50–173 (HLVKQASKEH…FIKNRLYANS (124 aa)) is the GST C-terminal domain. Residues 57–63 (KEHLLGS) form a linker region. A C-terminal region spans residues 64 to 152 (TAEEKALVQQ…SRWFCHIQHY (89 aa)). Lys138 is modified (N6-acetyllysine). Residues 153–169 (PDIRQHLSSVVFIKNRL) are a coiled coil.

In terms of assembly, part of a multisubunit complex that groups tRNA ligases for Arg (RARS1), Asp (DARS1), Gln (QARS1), Ile (IARS1), Leu (LARS1), Lys (KARS1), Met (MARS1) the bifunctional ligase for Glu and Pro (EPRS1) and the auxiliary subunits AIMP1/p43, AIMP2/p38 and EEF1E1/p18. Can interact simultaneously with MARS1 and EPRS1. Forms a linear complex that contains MARS1, EEF1E1, EPRS1 and AIMP2 that is at the core of the multisubunit complex. Interacts with ATM and ATR. The interaction with ATM, which takes place independently of TP53, is induced by DNA damage that may occur during genotoxic stress or cell growth. The interaction with ATR is enhanced by UV irradiation.

It is found in the cytoplasm. It localises to the nucleus. In terms of biological role, positive modulator of ATM response to DNA damage. This chain is Eukaryotic translation elongation factor 1 epsilon-1 (EEF1E1), found in Cricetulus griseus (Chinese hamster).